The sequence spans 296 residues: N-acetylmuramic acid 6-phosphate etherase (296 aa).

The SIS domain maps to 54 to 217; sequence VTESFRKGGR…STTSMVGIGK (164 aa). Glu-82 functions as the Proton donor in the catalytic mechanism. Residue Glu-113 is part of the active site.

It belongs to the GCKR-like family. MurNAc-6-P etherase subfamily. As to quaternary structure, homodimer.

It carries out the reaction N-acetyl-D-muramate 6-phosphate + H2O = N-acetyl-D-glucosamine 6-phosphate + (R)-lactate. It participates in amino-sugar metabolism; N-acetylmuramate degradation. Specifically catalyzes the cleavage of the D-lactyl ether substituent of MurNAc 6-phosphate, producing GlcNAc 6-phosphate and D-lactate. This Listeria welshimeri serovar 6b (strain ATCC 35897 / DSM 20650 / CCUG 15529 / CIP 8149 / NCTC 11857 / SLCC 5334 / V8) protein is N-acetylmuramic acid 6-phosphate etherase.